A 497-amino-acid polypeptide reads, in one-letter code: Cytochrome P450 71A14 (497 aa).

The helical transmembrane segment at 3 to 23 (MIIISLCLATILALLLLKQFL) threads the bilayer. C440 provides a ligand contact to heme.

This sequence belongs to the cytochrome P450 family. It depends on heme as a cofactor.

Its subcellular location is the membrane. The sequence is that of Cytochrome P450 71A14 (CYP71A14) from Arabidopsis thaliana (Mouse-ear cress).